We begin with the raw amino-acid sequence, 119 residues long: UPF0102 protein Nther_1376 (119 aa).

Belongs to the UPF0102 family.

The polypeptide is UPF0102 protein Nther_1376 (Natranaerobius thermophilus (strain ATCC BAA-1301 / DSM 18059 / JW/NM-WN-LF)).